Reading from the N-terminus, the 307-residue chain is Ubiquinol oxidase subunit 2 (307 aa).

The first 23 residues, 1-23 (MKNKLLARVARLGGLSSALLLAG), serve as a signal peptide directing secretion. Residue C24 is the site of N-palmitoyl cysteine attachment. A lipid anchor (S-diacylglycerol cysteine) is attached at C24. Transmembrane regions (helical) follow at residues 46–66 (STVA…LFAW) and 87–107 (IEVT…VITY).

This sequence belongs to the cytochrome c oxidase subunit 2 family. As to quaternary structure, heterotetramer of the subunits 1, 2, 3 and 4.

Its subcellular location is the cell membrane. This is Ubiquinol oxidase subunit 2 (cyaB) from Acetobacter aceti.